Reading from the N-terminus, the 1721-residue chain is Ras guanine nucleotide exchange factor R (1721 aa).

Residues 148-279 adopt a coiled-coil conformation; the sequence is QLEDEVDLVH…LQQQQQQQRS (132 aa). Disordered stretches follow at residues 213–232, 445–515, 551–701, 716–766, 797–837, and 929–981; these read QQQK…KEEK, SSLG…NQQP, ATTT…VDKQ, RTPL…KSPS, TITI…TPNK, and DEVS…DPVS. Residues 216–232 are compositionally biased toward basic and acidic residues; that stretch reads KHQEEKEKNDQKEKEEK. Composition is skewed to low complexity over residues 454–469, 479–493, 501–515, and 551–581; these read SPEK…STSE, HNNN…STNN, PSLS…NQQP, and ATTT…LSIS. The segment covering 618 to 627 has biased composition (polar residues); that stretch reads NGTTSPRNNE. Low complexity-rich tracts occupy residues 628 to 651 and 663 to 686; these read SSVT…VNTI and TPTT…SQND. The segment covering 687–701 has biased composition (basic and acidic residues); it reads KQNENNNKENFVDKQ. Low complexity-rich tracts occupy residues 724 to 748, 797 to 836, and 933 to 952; these read SSNS…TNSS, TITI…TTPN, and ESSS…NTPS. A coiled-coil region spans residues 802–831; the sequence is NNNNNNNNNNNNNNNNNNNIQQQQQQQQQI. Positions 968 to 978 are enriched in polar residues; sequence NLSSINNSSYD. The N-terminal Ras-GEF domain maps to 1291-1411; the sequence is GRYVPKAGTL…ILGGLIKKKE (121 aa). A Ras-GEF domain is found at 1447–1676; sequence NESEIARQLT…YQLSLIREPR (230 aa).

In terms of processing, phosphorylated on threonine residues.

In terms of biological role, promotes the exchange of Ras-bound GDP by GTP. May also play a role in the activation of rasG. This is Ras guanine nucleotide exchange factor R (gefR) from Dictyostelium discoideum (Social amoeba).